The sequence spans 491 residues: Probable cytosol aminopeptidase (491 aa).

Mn(2+) contacts are provided by K264 and D269. K276 is a catalytic residue. Mn(2+) is bound by residues D287, D346, and E348. R350 is an active-site residue.

Belongs to the peptidase M17 family. It depends on Mn(2+) as a cofactor.

Its subcellular location is the cytoplasm. The enzyme catalyses Release of an N-terminal amino acid, Xaa-|-Yaa-, in which Xaa is preferably Leu, but may be other amino acids including Pro although not Arg or Lys, and Yaa may be Pro. Amino acid amides and methyl esters are also readily hydrolyzed, but rates on arylamides are exceedingly low.. It carries out the reaction Release of an N-terminal amino acid, preferentially leucine, but not glutamic or aspartic acids.. Functionally, presumably involved in the processing and regular turnover of intracellular proteins. Catalyzes the removal of unsubstituted N-terminal amino acids from various peptides. This chain is Probable cytosol aminopeptidase, found in Xylella fastidiosa (strain M12).